The chain runs to 542 residues: Chaperonin GroEL 1 (542 aa).

ATP-binding positions include 30–33 (TLGP), K51, 87–91 (DGTTT), G415, 480–482 (NAA), and D496.

The protein belongs to the chaperonin (HSP60) family. As to quaternary structure, forms a cylinder of 14 subunits composed of two heptameric rings stacked back-to-back. Interacts with the co-chaperonin GroES.

The protein resides in the cytoplasm. It catalyses the reaction ATP + H2O + a folded polypeptide = ADP + phosphate + an unfolded polypeptide.. Functionally, together with its co-chaperonin GroES, plays an essential role in assisting protein folding. The GroEL-GroES system forms a nano-cage that allows encapsulation of the non-native substrate proteins and provides a physical environment optimized to promote and accelerate protein folding. This Nitrobacter winogradskyi (strain ATCC 25391 / DSM 10237 / CIP 104748 / NCIMB 11846 / Nb-255) protein is Chaperonin GroEL 1.